A 326-amino-acid chain; its full sequence is Tagatose 1,6-diphosphate aldolase (326 aa).

It belongs to the aldolase LacD family.

It carries out the reaction D-tagatofuranose 1,6-bisphosphate = D-glyceraldehyde 3-phosphate + dihydroxyacetone phosphate. It participates in carbohydrate metabolism; D-tagatose 6-phosphate degradation; D-glyceraldehyde 3-phosphate and glycerone phosphate from D-tagatose 6-phosphate: step 2/2. In Streptococcus pneumoniae (strain ATCC BAA-255 / R6), this protein is Tagatose 1,6-diphosphate aldolase.